The following is a 124-amino-acid chain: Small ribosomal subunit protein uS12 (124 aa).

The protein belongs to the universal ribosomal protein uS12 family. Part of the 30S ribosomal subunit. Contacts proteins S8 and S17. May interact with IF1 in the 30S initiation complex.

In terms of biological role, with S4 and S5 plays an important role in translational accuracy. Interacts with and stabilizes bases of the 16S rRNA that are involved in tRNA selection in the A site and with the mRNA backbone. Located at the interface of the 30S and 50S subunits, it traverses the body of the 30S subunit contacting proteins on the other side and probably holding the rRNA structure together. The combined cluster of proteins S8, S12 and S17 appears to hold together the shoulder and platform of the 30S subunit. The polypeptide is Small ribosomal subunit protein uS12 (Photorhabdus laumondii subsp. laumondii (strain DSM 15139 / CIP 105565 / TT01) (Photorhabdus luminescens subsp. laumondii)).